Reading from the N-terminus, the 852-residue chain is DNA double-strand break repair Rad50 ATPase (852 aa).

Residues Asn-32, Gly-33, Ala-34, Gly-35, Lys-36, Ser-37, Ser-38, Arg-53, Tyr-54, Asp-59, Val-61, and Arg-63 each coordinate ATP. Ser-37 lines the Mg(2+) pocket. Gln-142 is a Mg(2+) binding site. Coiled-coil stretches lie at residues 155 to 345 and 389 to 427; these read EITE…EELD and LLSI…QIAS. One can recognise a Zinc-hook domain in the interval 389–488; that stretch reads LLSIEKTENE…SLSSLIEDLL (100 aa). Residues Cys-435 and Cys-438 each coordinate Zn(2+). Coiled coils occupy residues 460–488 and 534–711; these read DQKR…EDLL and KIEE…LFDK. A Mg(2+)-binding site is contributed by Asp-797.

The protein belongs to the SMC family. RAD50 subfamily. Homodimer. Forms a complex with Mre11. The cofactor is Zn(2+).

The catalysed reaction is ATP + H2O = ADP + phosphate + H(+). In terms of biological role, involved in DNA double-strand break repair (DSBR). The Rad50/Mre11 complex possesses single-strand endonuclease activity and ATP-dependent double-strand-specific 3'-5' exonuclease activity. Rad50 provides an ATP-dependent control of Mre11 by positioning DNA ends into the Mre11 active site: ATP-binding induces a large structural change from an open form with accessible Mre11 nuclease sites into a closed form. The protein is DNA double-strand break repair Rad50 ATPase of Thermotoga maritima (strain ATCC 43589 / DSM 3109 / JCM 10099 / NBRC 100826 / MSB8).